Consider the following 161-residue polypeptide: Putative 4-hydroxy-4-methyl-2-oxoglutarate aldolase (161 aa).

Substrate is bound by residues 75–78 and Arg97; that span reads GDQL. Position 98 (Asp98) interacts with a divalent metal cation.

Belongs to the class II aldolase/RraA-like family. As to quaternary structure, homotrimer. Requires a divalent metal cation as cofactor.

The enzyme catalyses 4-hydroxy-4-methyl-2-oxoglutarate = 2 pyruvate. The catalysed reaction is oxaloacetate + H(+) = pyruvate + CO2. Its function is as follows. Catalyzes the aldol cleavage of 4-hydroxy-4-methyl-2-oxoglutarate (HMG) into 2 molecules of pyruvate. Also contains a secondary oxaloacetate (OAA) decarboxylase activity due to the common pyruvate enolate transition state formed following C-C bond cleavage in the retro-aldol and decarboxylation reactions. This is Putative 4-hydroxy-4-methyl-2-oxoglutarate aldolase from Vibrio cholerae serotype O1 (strain ATCC 39315 / El Tor Inaba N16961).